The primary structure comprises 89 residues: Small ribosomal subunit protein bS20 (89 aa).

2 disordered regions span residues 1 to 25 (MANI…ASMK) and 69 to 89 (KNAA…IQAS). The segment covering 7–20 (AIKRAKTSEKRRAH) has biased composition (basic residues).

It belongs to the bacterial ribosomal protein bS20 family.

Functionally, binds directly to 16S ribosomal RNA. The protein is Small ribosomal subunit protein bS20 of Geobacillus kaustophilus (strain HTA426).